We begin with the raw amino-acid sequence, 82 residues long: Putative membrane protein insertion efficiency factor (82 aa).

Belongs to the UPF0161 family.

Its subcellular location is the cell inner membrane. Could be involved in insertion of integral membrane proteins into the membrane. This is Putative membrane protein insertion efficiency factor from Thermus thermophilus (strain ATCC BAA-163 / DSM 7039 / HB27).